Reading from the N-terminus, the 1093-residue chain is Mediator of RNA polymerase II transcription subunit 14 (1093 aa).

Disordered regions lie at residues 1-61 (MPGV…KIDG) and 1035-1060 (TKSD…SQAA). Residues 19 to 31 (DTQTPSNGDNLRN) show a composition bias toward polar residues. Over residues 41 to 61 (KGDKDHDPDKESYTGKPKIDG) the composition is skewed to basic and acidic residues. Over residues 1040–1056 (DYSTQPVPEKQSQTGAP) the composition is skewed to polar residues.

It belongs to the Mediator complex subunit 14 family. As to quaternary structure, component of the Mediator complex.

It is found in the nucleus. Functionally, component of the Mediator complex, a coactivator involved in the regulated transcription of nearly all RNA polymerase II-dependent genes. Mediator functions as a bridge to convey information from gene-specific regulatory proteins to the basal RNA polymerase II transcription machinery. Mediator is recruited to promoters by direct interactions with regulatory proteins and serves as a scaffold for the assembly of a functional preinitiation complex with RNA polymerase II and the general transcription factors. The sequence is that of Mediator of RNA polymerase II transcription subunit 14 (rgr1) from Neosartorya fischeri (strain ATCC 1020 / DSM 3700 / CBS 544.65 / FGSC A1164 / JCM 1740 / NRRL 181 / WB 181) (Aspergillus fischerianus).